Consider the following 323-residue polypeptide: Replication-associated protein A (323 aa).

The 104-residue stretch at 18-121 (RHRNANTFLT…PKDKWEKGTY (104 aa)) folds into the CRESS-DNA virus Rep endonuclease domain. An RCR-1 motif is present at residues 25–28 (FLTY). 3 residues coordinate a divalent metal cation: Glu59, His67, and His69. The RCR-2 signature appears at 67–69 (HCH). Tyr107 functions as the For DNA cleavage activity in the catalytic mechanism. The short motif at 107-110 (YILK) is the RCR-3 element. Residue Asp111 participates in a divalent metal cation binding. The interval 181-193 (SASRLFPDIAEPY) is oligomerization. Positions 204-208 (LHCNE) match the LXCXE motif, interaction with host RBR1 motif. Residues 256 to 286 (KEREASTSAAQHGQVKHPGLEASDDTTTGKT) form a disordered region.

It belongs to the geminiviridae Rep protein family. Homooligomer. Interacts (via LXCXE domain) with host retinoblastoma-related protein 1 (RBR1), and may thereby deregulate the host cell cycle. Part of the C- and V-complexes which are RepA-Rep-DNA complexes involved in the c-sense and v-sense transcription. The cofactor is Mg(2+). Requires Mn(2+) as cofactor.

The protein resides in the host nucleus. It is found in the host cytoplasm. Its function is as follows. Implicated in enhancement of V-sense gene expression. Acts a an inhibitor of C-sense gene transcription. In Megathyrsus maximus (PanSV), this protein is Replication-associated protein A.